Consider the following 77-residue polypeptide: Large ribosomal subunit protein bL28 (77 aa).

The protein belongs to the bacterial ribosomal protein bL28 family.

This is Large ribosomal subunit protein bL28 from Verminephrobacter eiseniae (strain EF01-2).